We begin with the raw amino-acid sequence, 1057 residues long: MIDVNNFHYMKIGLASPEKIRSWSFGEVKKPETINYRTLKPEKDGLFCERIFGPTKDWECSCGKYKRVRYKGMVCDRCGVEVTKSKVRRERMGHIELAAPVSHIWYFKGIPSRMGLLLDMSPRALEEVIYFASYVVVDPGPTGLEKKTLLSEAEFRDYYDKYPGQFVAKMGAEGIKDLLEEIDLDEELKLLRDELESATGQRLTRAIKRLEVVESFRNSGNKPSWMILDVLPIIPPEIRPMAQLDGGRFATSDLNDLYRRVINRNNRLKRLLDLGAPGIIVQNEKRMLQEAVDALIDNGRRGRPVTGPGNRPLKSLSHMLKGKQGRFRQNLLGKRVDYSGRSVIAVGPSLKMYQCGLPKEMALELFKPFVMKELVQREIATNIKNAKSKIERMDDEVWDVLEEVIREHPVLLNRAPTLHRLGIQAFEPTLVEGRAIRLHPLVTTAYNADFDGDQMAVHVPLSKEAQAEARMLMLAAQNILNPKDGKPVVTPSQDMVLGNYYLTLERKDAVNTGAIFNNTNEVLKAYANGFVHLHTRIGVHASSFNNPTFTEEQNKKILATSVGKIIFNEIIPDSFAYINEPTQENLERKTPNRNFIDPTTLGEGGLKEYFENEELIEPFNKKFLGNIIAEVFNRFSITDTSMMLDRMKDLGFKFSSKAGITVGVADIVVLPDKQQILDEHEKLVDRITKQFNRGLITEEERYNAVVEIWTDAKDQIQGELMQSLDKTNPIFMMSDSGARGNASNFTQLAGMRGLMAAPSGKIIELPITSSFREGLTVLEYFISTHGARKGLADTALKTADSGYLTRRLVDVAQDVIVREEDCGTDRGLLVSDIKEGTEMIEPFIERIEGRYSKETIRHPETDEIIIRPDELITPEIAKKITDAGIEQMYIRSAFTCNARHGVCEKCYGKNLATGEKVEVGEAVGTIAAQSIGEPGTQLTMRTFHTGGVAGSDITQGLPRIQEIFEARNPKGQAVITEIEGVVEDIKLAKDRQQEIVVKGANETRSYLASGTSRIIVEIGQPVQRGEVLTEGSIEPKNYLSVAGLNATESYLLKEVQK.

Cys60, Cys62, Cys75, and Cys78 together coordinate Zn(2+). Mg(2+) is bound by residues Asp449, Asp451, and Asp453. 4 residues coordinate Zn(2+): Cys822, Cys896, Cys903, and Cys906.

The protein belongs to the RNA polymerase beta' chain family. As to quaternary structure, the RNAP catalytic core consists of 2 alpha, 1 beta, 1 beta' and 1 omega subunit. When a sigma factor is associated with the core the holoenzyme is formed, which can initiate transcription. The cofactor is Mg(2+). It depends on Zn(2+) as a cofactor.

The enzyme catalyses RNA(n) + a ribonucleoside 5'-triphosphate = RNA(n+1) + diphosphate. Its function is as follows. DNA-dependent RNA polymerase catalyzes the transcription of DNA into RNA using the four ribonucleoside triphosphates as substrates. The chain is DNA-directed RNA polymerase subunit beta' from Staphylococcus aureus.